The sequence spans 129 residues: MAKEFSRTQRIGDQMQRELALLIQREIKDPRLGLITITAVDVSRDLSHAKIFITIMGQDDDQEAIKGNLRILNDAAGFLRMQLGKSMKLRTVPQLHFNYDASIRRGVELSSLIERAVAEDRKHSDERGE.

Belongs to the RbfA family. In terms of assembly, monomer. Binds 30S ribosomal subunits, but not 50S ribosomal subunits or 70S ribosomes.

The protein localises to the cytoplasm. Its function is as follows. One of several proteins that assist in the late maturation steps of the functional core of the 30S ribosomal subunit. Associates with free 30S ribosomal subunits (but not with 30S subunits that are part of 70S ribosomes or polysomes). Required for efficient processing of 16S rRNA. May interact with the 5'-terminal helix region of 16S rRNA. The chain is Ribosome-binding factor A from Stutzerimonas stutzeri (strain A1501) (Pseudomonas stutzeri).